A 263-amino-acid chain; its full sequence is Calpain small subunit 1 (263 aa).

Methionine 1 bears the N-acetylmethionine mark. A Phosphoserine modification is found at serine 6. The EF-hand 1; atypical domain occupies glutamate 91–arginine 125. Residues alanine 104, aspartate 107, glutamate 109, glutamate 114, aspartate 132, aspartate 147, aspartate 149, threonine 151, lysine 153, and glutamate 158 each contribute to the Ca(2+) site. EF-hand domains follow at residues phenylalanine 134–lysine 167, asparagine 164–arginine 199, leucine 200–leucine 228, and valine 229–serine 263. Lysine 174 bears the N6-acetyllysine mark. 6 residues coordinate Ca(2+): aspartate 177, aspartate 179, serine 181, threonine 183, glutamate 188, and aspartate 220.

In terms of assembly, homodimer or heterodimer of a large (catalytic) and a small (regulatory) subunit. In presence of calcium, the heterodimer dissociates.

It is found in the cytoplasm. Its subcellular location is the cell membrane. Regulatory subunit of the calcium-regulated non-lysosomal thiol-protease which catalyzes limited proteolysis of substrates involved in cytoskeletal remodeling and signal transduction. Essential for embryonic development. The sequence is that of Calpain small subunit 1 (CAPNS1) from Bos taurus (Bovine).